A 211-amino-acid chain; its full sequence is uncharacterized protein (211 aa).

The Zn(2+) site is built by His-54, His-56, Asp-58, His-59, His-129, Asp-148, and His-189.

This sequence belongs to the metallo-beta-lactamase superfamily. Glyoxalase II family. The cofactor is Zn(2+).

This is an uncharacterized protein from Aquifex aeolicus (strain VF5).